We begin with the raw amino-acid sequence, 74 residues long: UPF0291 protein lmo0496 (74 aa).

The protein belongs to the UPF0291 family.

The protein localises to the cytoplasm. The protein is UPF0291 protein lmo0496 of Listeria monocytogenes serovar 1/2a (strain ATCC BAA-679 / EGD-e).